The sequence spans 315 residues: Polyprenyl transferase mpaA (315 aa).

8 consecutive transmembrane segments (helical) span residues 40–60, 84–103, 118–135, 143–163, 174–194, 224–244, 248–268, and 279–299; these read IEFI…LCGA, LASG…GQYF, IWSL…YPYL, VFVY…ITGW, GDII…CVYF, LFLA…ISTI, WLWV…IAQF, and IHWD…VEVG.

The protein belongs to the UbiA prenyltransferase family. It depends on Mg(2+) as a cofactor.

It localises to the golgi apparatus membrane. It catalyses the reaction 5,7-dihydroxy-4-methylphthalide + (2E,6E)-farnesyl diphosphate = 4-farnesyl-3,5-dihydroxy-6-methylphthalide + diphosphate. It participates in secondary metabolite biosynthesis; terpenoid biosynthesis. In terms of biological role, polyprenyl transferase; part of the gene cluster that mediates the biosynthesis of mycophenolic acid (MPA), the first isolated antibiotic natural product in the world obtained from a culture of Penicillium brevicompactum in 1893. MpaA is a Golgi apparatus-associated enzyme that catalyzes the prenylation of 5,7-dihydroxy-4,6-dimethylphthalide (DHMP) to yield farnesyl-DHMP (FDHMP). The first step of the pathway is the synthesis of 5-methylorsellinic acid (5MOA) by the cytosolic polyketide synthase mpaC. 5MOA is then converted to the phthalide compound 5,7-dihydroxy-4,6-dimethylphthalide (DHMP) by the endoplasmic reticulum-bound cytochrome P450 monooxygenase mpaDE. MpaDE first catalyzes hydroxylation of 5-MOA to 4,6-dihydroxy-2-(hydroxymethyl)-3-methylbenzoic acid (DHMB). MpaDE then acts as a lactone synthase that catalyzes the ring closure to convert DHMB into DHMP. The next step is the prenylation of DHMP by the Golgi apparatus-associated prenyltransferase mpaA to yield farnesyl-DHMP (FDHMP). The ER-bound oxygenase mpaB then mediates the oxidative cleavage the C19-C20 double bond in FDHMP to yield FDHMP-3C via a mycophenolic aldehyde intermediate. The O-methyltransferase mpaG catalyzes the methylation of FDHMP-3C to yield MFDHMP-3C. After the cytosolic methylation of FDHMP-3C, MFDHMP-3C enters into peroxisomes probably via free diffusion due to its low molecular weight. Upon a peroxisomal CoA ligation reaction, catalyzed by a beta-oxidation component enzyme acyl-CoA ligase ACL891, MFDHMP-3C-CoA would then be restricted to peroxisomes for the following beta-oxidation pathway steps. The peroxisomal beta-oxidation machinery than converts MFDHMP-3C-CoA into MPA_CoA, via a beta-oxidation chain-shortening process. Finally mpaH acts as a peroxisomal acyl-CoA hydrolase with high substrate specificity toward MPA-CoA to release the final product MPA. This chain is Polyprenyl transferase mpaA, found in Penicillium brevicompactum.